A 307-amino-acid polypeptide reads, in one-letter code: Pseudouridine-5'-phosphate glycosidase (307 aa).

Catalysis depends on Glu28, which acts as the Proton donor. Substrate contacts are provided by Lys89 and Val109. Asp141 serves as a coordination point for Mn(2+). 143 to 145 (SAD) serves as a coordination point for substrate. Catalysis depends on Lys162, which acts as the Nucleophile.

This sequence belongs to the pseudouridine-5'-phosphate glycosidase family. As to quaternary structure, homotrimer. Requires Mn(2+) as cofactor.

It catalyses the reaction D-ribose 5-phosphate + uracil = psi-UMP + H2O. Catalyzes the reversible cleavage of pseudouridine 5'-phosphate (PsiMP) to ribose 5-phosphate and uracil. Functions biologically in the cleavage direction, as part of a pseudouridine degradation pathway. The polypeptide is Pseudouridine-5'-phosphate glycosidase (Nocardioides sp. (strain ATCC BAA-499 / JS614)).